The chain runs to 906 residues: Protein translocase subunit SecA (906 aa).

ATP-binding positions include Q87, 105 to 109 (GEGKT), and D507. C890, C892, C901, and H902 together coordinate Zn(2+).

Belongs to the SecA family. In terms of assembly, monomer and homodimer. Part of the essential Sec protein translocation apparatus which comprises SecA, SecYEG and auxiliary proteins SecDF-YajC and YidC. Zn(2+) serves as cofactor.

It localises to the cell inner membrane. It is found in the cytoplasm. The enzyme catalyses ATP + H2O + cellular proteinSide 1 = ADP + phosphate + cellular proteinSide 2.. Part of the Sec protein translocase complex. Interacts with the SecYEG preprotein conducting channel. Has a central role in coupling the hydrolysis of ATP to the transfer of proteins into and across the cell membrane, serving both as a receptor for the preprotein-SecB complex and as an ATP-driven molecular motor driving the stepwise translocation of polypeptide chains across the membrane. The protein is Protein translocase subunit SecA of Laribacter hongkongensis (strain HLHK9).